The primary structure comprises 1188 residues: F-box only protein 38 (1188 aa).

Residues 30-75 (MNQLSHEVLCHIFRYLPLQDIMCMECLSRKLKEAVTLYLRVVRVVD) form the F-box domain. Residues 59 to 119 (KLKEAVTLYL…LHPRYLERRR (61 aa)) are interaction with KLF7. Short sequence motifs (nuclear export signal) lie at residues 194-201 (LHLVGVNV), 307-316 (LEVDLGYLII), and 451-460 (LLPSLEFISL). The interval 487 to 526 (ALVSNQNSNNDDNNAQNNNANIHDNNHHHPDDSDEENDFR) is disordered. Residues 491–509 (NQNSNNDDNNAQNNNANIH) show a composition bias toward low complexity. At threonine 591 the chain carries Phosphothreonine. A phosphoserine mark is found at serine 598, serine 600, and serine 606. Disordered regions lie at residues 620–666 (RRYS…FPLE), 685–766 (MKAA…MEEG), and 787–909 (RTSR…STSD). Composition is skewed to basic and acidic residues over residues 621-630 (RYSEREEKTG) and 685-699 (MKAA…KNKD). Positions 703-740 (SCSSTTASTVGNSSSHNTASQSPDFVRTVNSGGSSEPS) are enriched in polar residues. 2 positions are modified to phosphoserine: serine 736 and serine 740. Residues 787 to 798 (RTSRCSDEERPS) show a composition bias toward basic and acidic residues. Residues 849–861 (SSQPESCDVQSNE) are compositionally biased toward polar residues. Basic residues predominate over residues 889–900 (TKPRHAMKRKRT). The Nuclear localization signal motif lies at 896 to 899 (KRKR).

In terms of assembly, part of the SCF (SKP1-CUL1-F-box) E3 ubiquitin-protein ligase complex SCF(FBXO38) composed of CUL1, SKP1, RBX1 and FBXO38. Interacts with KLF7. Interacts with PDCD1/PD-1.

Its subcellular location is the cytoplasm. It is found in the cytosol. The protein localises to the nucleus. It participates in protein modification; protein ubiquitination. Its function is as follows. Substrate recognition component of a SCF (SKP1-CUL1-F-box protein) E3 ubiquitin-protein ligase complex which mediates the ubiquitination and subsequent proteasomal degradation of PDCD1/PD-1, thereby regulating T-cells-mediated immunity. Required for anti-tumor activity of T-cells by promoting the degradation of PDCD1/PD-1; the PDCD1-mediated inhibitory pathway being exploited by tumors to attenuate anti-tumor immunity and facilitate tumor survival. May indirectly stimulate the activity of transcription factor KLF7, a regulator of neuronal differentiation, without promoting KLF7 ubiquitination. In Homo sapiens (Human), this protein is F-box only protein 38.